The chain runs to 421 residues: Bone morphogenetic protein 10 (421 aa).

The N-terminal stretch at 1 to 21 is a signal peptide; sequence MGSLVLPLSAVFCLVAHSASG. Residues 22-313 constitute a propeptide that is removed on maturation; that stretch reads SPIMGLEQSP…IDDSSARIRR (292 aa). N-linked (GlcNAc...) asparagine glycans are attached at residues N67 and N131. 3 disulfides stabilise this stretch: C320-C386, C349-C418, and C353-C420.

It belongs to the TGF-beta family. As to quaternary structure, homodimer; disulfide-linked. Interacts with FBN1 (via N-terminal domain) and FBN2. Interacts with ENG. In terms of tissue distribution, in the embryo, expressed exclusively in the ventricular trabecular myocardium of the developing heart from 9.0 dpc-13.5 dpc. By 16.5 dpc-18.5 dpc, only detectable in atria. Highly expressed in the adult heart where it is found in the right atrium but not in the left atrium. Lower levels in adult liver and lung.

The protein localises to the secreted. Its function is as follows. Required for maintaining the proliferative activity of embryonic cardiomyocytes by preventing premature activation of the negative cell cycle regulator CDKN1C/p57KIP and maintaining the required expression levels of cardiogenic factors such as MEF2C and NKX2-5. Acts as a ligand for ACVRL1/ALK1, BMPR1A/ALK3 and BMPR1B/ALK6, leading to activation of SMAD1, SMAD5 and SMAD8 transcription factors. Inhibits endothelial cell migration and growth. May reduce cell migration and cell matrix adhesion in breast cancer cell lines. In Mus musculus (Mouse), this protein is Bone morphogenetic protein 10 (Bmp10).